Here is a 559-residue protein sequence, read N- to C-terminus: DNA ligase (559 aa).

Residue E247 coordinates ATP. K249 functions as the N6-AMP-lysine intermediate in the catalytic mechanism. R254, R269, E299, F339, R414, and K420 together coordinate ATP.

The protein belongs to the ATP-dependent DNA ligase family. Mg(2+) is required as a cofactor.

It carries out the reaction ATP + (deoxyribonucleotide)n-3'-hydroxyl + 5'-phospho-(deoxyribonucleotide)m = (deoxyribonucleotide)n+m + AMP + diphosphate.. Functionally, DNA ligase that seals nicks in double-stranded DNA during DNA replication, DNA recombination and DNA repair. This chain is DNA ligase, found in Pyrococcus abyssi.